The chain runs to 464 residues: Trehalose-6-phosphate synthase (464 aa).

Arginine 10 is a D-glucose 6-phosphate binding site. 23–24 lines the UDP-alpha-D-glucose pocket; sequence GG. The D-glucose 6-phosphate site is built by tyrosine 81 and aspartate 135. UDP-alpha-D-glucose-binding residues include arginine 268 and lysine 273. Arginine 306 contributes to the D-glucose 6-phosphate binding site. Position 371 to 375 (371 to 375) interacts with UDP-alpha-D-glucose; it reads LVAKE.

Belongs to the glycosyltransferase 20 family. In terms of assembly, homotetramer.

It carries out the reaction D-glucose 6-phosphate + UDP-alpha-D-glucose = alpha,alpha-trehalose 6-phosphate + UDP + H(+). It functions in the pathway glycan biosynthesis; trehalose biosynthesis. Its function is as follows. Probably involved in the osmoprotection via the biosynthesis of trehalose. Catalyzes the transfer of glucose from UDP-alpha-D-glucose (UDP-Glc) to D-glucose 6-phosphate (Glc-6-P) to form trehalose-6-phosphate. Acts with retention of the anomeric configuration of the UDP-sugar donor. This is Trehalose-6-phosphate synthase from Sinorhizobium fredii (strain NBRC 101917 / NGR234).